Consider the following 403-residue polypeptide: Phosphopentomutase (403 aa).

Mn(2+) contacts are provided by D13, D298, H303, D339, H340, and H351.

This sequence belongs to the phosphopentomutase family. Requires Mn(2+) as cofactor.

The protein resides in the cytoplasm. The catalysed reaction is 2-deoxy-alpha-D-ribose 1-phosphate = 2-deoxy-D-ribose 5-phosphate. The enzyme catalyses alpha-D-ribose 1-phosphate = D-ribose 5-phosphate. The protein operates within carbohydrate degradation; 2-deoxy-D-ribose 1-phosphate degradation; D-glyceraldehyde 3-phosphate and acetaldehyde from 2-deoxy-alpha-D-ribose 1-phosphate: step 1/2. Isomerase that catalyzes the conversion of deoxy-ribose 1-phosphate (dRib-1-P) and ribose 1-phosphate (Rib-1-P) to deoxy-ribose 5-phosphate (dRib-5-P) and ribose 5-phosphate (Rib-5-P), respectively. This is Phosphopentomutase from Streptococcus uberis (strain ATCC BAA-854 / 0140J).